Reading from the N-terminus, the 136-residue chain is Nucleoside diphosphate kinase (136 aa).

Residues Lys10, Phe58, Arg86, Thr92, Arg104, and Asn114 each contribute to the ATP site. His117 (pros-phosphohistidine intermediate) is an active-site residue.

Belongs to the NDK family. As to quaternary structure, homotetramer. The cofactor is Mg(2+).

It localises to the cytoplasm. The catalysed reaction is a 2'-deoxyribonucleoside 5'-diphosphate + ATP = a 2'-deoxyribonucleoside 5'-triphosphate + ADP. The enzyme catalyses a ribonucleoside 5'-diphosphate + ATP = a ribonucleoside 5'-triphosphate + ADP. Major role in the synthesis of nucleoside triphosphates other than ATP. The ATP gamma phosphate is transferred to the NDP beta phosphate via a ping-pong mechanism, using a phosphorylated active-site intermediate. This Saccharopolyspora erythraea (strain ATCC 11635 / DSM 40517 / JCM 4748 / NBRC 13426 / NCIMB 8594 / NRRL 2338) protein is Nucleoside diphosphate kinase.